A 189-amino-acid polypeptide reads, in one-letter code: Elongation factor P (189 aa).

This sequence belongs to the elongation factor P family.

The protein resides in the cytoplasm. It functions in the pathway protein biosynthesis; polypeptide chain elongation. Functionally, involved in peptide bond synthesis. Stimulates efficient translation and peptide-bond synthesis on native or reconstituted 70S ribosomes in vitro. Probably functions indirectly by altering the affinity of the ribosome for aminoacyl-tRNA, thus increasing their reactivity as acceptors for peptidyl transferase. The protein is Elongation factor P of Orientia tsutsugamushi (strain Ikeda) (Rickettsia tsutsugamushi).